The primary structure comprises 299 residues: Bifunctional protein FolD (299 aa).

NADP(+) contacts are provided by residues 179 to 181 (GPG) and Ile245.

The protein belongs to the tetrahydrofolate dehydrogenase/cyclohydrolase family. In terms of assembly, homodimer.

The catalysed reaction is (6R)-5,10-methylene-5,6,7,8-tetrahydrofolate + NADP(+) = (6R)-5,10-methenyltetrahydrofolate + NADPH. The enzyme catalyses (6R)-5,10-methenyltetrahydrofolate + H2O = (6R)-10-formyltetrahydrofolate + H(+). It participates in one-carbon metabolism; tetrahydrofolate interconversion. In terms of biological role, catalyzes the oxidation of 5,10-methylenetetrahydrofolate to 5,10-methenyltetrahydrofolate and then the hydrolysis of 5,10-methenyltetrahydrofolate to 10-formyltetrahydrofolate. This is Bifunctional protein FolD from Deinococcus radiodurans (strain ATCC 13939 / DSM 20539 / JCM 16871 / CCUG 27074 / LMG 4051 / NBRC 15346 / NCIMB 9279 / VKM B-1422 / R1).